Consider the following 322-residue polypeptide: Transcription cofactor vestigial-like protein 2 (322 aa).

The segment covering 42–61 (ASPGSSASGSSSFSNPTPAS) has biased composition (low complexity). Disordered stretches follow at residues 42-75 (ASPGSSASGSSSFSNPTPASVKEEEGSPEKERPP) and 248-322 (PGRL…PTLG). Residues 62 to 75 (VKEEEGSPEKERPP) are compositionally biased toward basic and acidic residues. Low complexity-rich tracts occupy residues 248–258 (PGRLAPASAPA) and 270–283 (GEPAGSAWAAPGGP). A compositionally biased stretch (pro residues) spans 312 to 322 (SAPPALYPTLG).

This sequence belongs to the vestigial family. In terms of assembly, interacts with TEFs. Binds to TEAD1/TEF1. As to expression, skeletal muscle specific.

The protein resides in the nucleus. May act as a specific coactivator for the mammalian TEFs. May play a role in the development of skeletal muscles. In Mus musculus (Mouse), this protein is Transcription cofactor vestigial-like protein 2 (Vgll2).